The chain runs to 151 residues: Large ribosomal subunit protein bL9 (151 aa).

This sequence belongs to the bacterial ribosomal protein bL9 family.

Its function is as follows. Binds to the 23S rRNA. This is Large ribosomal subunit protein bL9 from Lactobacillus acidophilus (strain ATCC 700396 / NCK56 / N2 / NCFM).